A 157-amino-acid polypeptide reads, in one-letter code: Large ribosomal subunit protein bL20 (157 aa).

The interval 121 to 157 is disordered; sequence TSAPAVSAEAAPKAKAAKKPAAKKAAAKKPVAEEAAK. Residues 122-134 show a composition bias toward low complexity; sequence SAPAVSAEAAPKA. The span at 135–147 shows a compositional bias: basic residues; sequence KAAKKPAAKKAAA.

This sequence belongs to the bacterial ribosomal protein bL20 family.

Binds directly to 23S ribosomal RNA and is necessary for the in vitro assembly process of the 50S ribosomal subunit. It is not involved in the protein synthesizing functions of that subunit. This Arthrobacter sp. (strain FB24) protein is Large ribosomal subunit protein bL20 (rplT).